Here is a 301-residue protein sequence, read N- to C-terminus: Phospholipase A1 (301 aa).

Cysteine 4 and cysteine 87 are joined by a disulfide. The active-site Nucleophile is serine 137. Catalysis depends on aspartate 165, which acts as the Charge relay system. Intrachain disulfides connect cysteine 176–cysteine 181 and cysteine 219–cysteine 228. The active-site Charge relay system is histidine 230. 3 cysteine pairs are disulfide-bonded: cysteine 245/cysteine 269, cysteine 246/cysteine 294, and cysteine 262/cysteine 267.

The protein belongs to the AB hydrolase superfamily. Lipase family. Expressed by the venom gland.

The protein localises to the secreted. It catalyses the reaction a 1,2-diacyl-sn-glycero-3-phosphocholine + H2O = a 2-acyl-sn-glycero-3-phosphocholine + a fatty acid + H(+). Its function is as follows. Catalyzes the hydrolysis of phosphatidylcholine with phospholipase A1 activity. May act as an allergen and induce hemolytic activity. This Vespa crabro (European hornet) protein is Phospholipase A1.